A 206-amino-acid chain; its full sequence is Small ribosomal subunit protein uS4 (206 aa).

Residues 96 to 158 form the S4 RNA-binding domain; that stretch reads GRLDNVVYRM…AKQQTRIKAA (63 aa).

The protein belongs to the universal ribosomal protein uS4 family. Part of the 30S ribosomal subunit. Contacts protein S5. The interaction surface between S4 and S5 is involved in control of translational fidelity.

Functionally, one of the primary rRNA binding proteins, it binds directly to 16S rRNA where it nucleates assembly of the body of the 30S subunit. Its function is as follows. With S5 and S12 plays an important role in translational accuracy. The sequence is that of Small ribosomal subunit protein uS4 from Vibrio vulnificus (strain CMCP6).